Consider the following 302-residue polypeptide: Probable 2-(5''-triphosphoribosyl)-3'-dephosphocoenzyme-A synthase 1 (302 aa).

Belongs to the CitG/MdcB family.

The enzyme catalyses 3'-dephospho-CoA + ATP = 2'-(5''-triphospho-alpha-D-ribosyl)-3'-dephospho-CoA + adenine. The polypeptide is Probable 2-(5''-triphosphoribosyl)-3'-dephosphocoenzyme-A synthase 1 (Salmonella paratyphi A (strain ATCC 9150 / SARB42)).